A 159-amino-acid chain; its full sequence is 3-dehydroquinate dehydratase (159 aa).

The Proton acceptor role is filled by Tyr-22. The substrate site is built by Asn-73, His-79, and Asp-86. His-99 (proton donor) is an active-site residue. Substrate-binding positions include 100 to 101 (IS) and Arg-110.

The protein belongs to the type-II 3-dehydroquinase family. As to quaternary structure, homododecamer.

It catalyses the reaction 3-dehydroquinate = 3-dehydroshikimate + H2O. The protein operates within metabolic intermediate biosynthesis; chorismate biosynthesis; chorismate from D-erythrose 4-phosphate and phosphoenolpyruvate: step 3/7. In terms of biological role, catalyzes a trans-dehydration via an enolate intermediate. The protein is 3-dehydroquinate dehydratase of Campylobacter jejuni subsp. jejuni serotype O:6 (strain 81116 / NCTC 11828).